Here is a 404-residue protein sequence, read N- to C-terminus: tRNA pseudouridine(31) synthase (404 aa).

Aspartate 168 is an active-site residue.

The protein belongs to the pseudouridine synthase RluA family.

It localises to the cytoplasm. The protein resides in the mitochondrion. It carries out the reaction uridine(31) in tRNA = pseudouridine(31) in tRNA. Its function is as follows. Catalyzes the formation of pseudouridine at position 31 in the psi GC loop of tRNAS. The chain is tRNA pseudouridine(31) synthase (PUS6) from Saccharomyces cerevisiae (strain ATCC 204508 / S288c) (Baker's yeast).